An 83-amino-acid chain; its full sequence is MRITIKRWGNSAGMVIPNIVMKELNLQPGQSVEAQVSNNQLILTPISRRYSLDELLAQCDMNAAELSEQDVWGKSTPAGDEIW.

Positions Ile3–Arg48 constitute a SpoVT-AbrB domain.

It belongs to the PemI family. Interacts with ChpB, inhibiting its endoribonuclease activity.

Functionally, antitoxin component of a type II toxin-antitoxin (TA) system. May be involved in the regulation of cell growth. It acts as a suppressor of the endoribonuclease (inhibitory function) of ChpB protein. Both ChpS and ChpB probably bind to the promoter region of the chpS-chpB operon to autoregulate their synthesis. The sequence is that of Antitoxin ChpS (chpS) from Escherichia coli (strain K12).